We begin with the raw amino-acid sequence, 374 residues long: Protein TAB2 homolog, chloroplastic (374 aa).

Residues 1 to 64 (MATLGFNTRR…SLSITKEQEV (64 aa)) constitute a chloroplast transit peptide. A disordered region spans residues 58-84 (ITKEQEVANEVEEDDPTSELSYLDPES). Residues 64–74 (VANEVEEDDPT) are compositionally biased toward acidic residues.

It is found in the plastid. The protein resides in the chloroplast. Nuclear genome-encoded A/U-rich RNA-binding protein involved in the biogenesis of photosystem I (PSI) and II (PSII). Required for the light-controlled accumulation of PSI and PSII during early plant development. Does not seem to be required for the translation of mRNAs of the PSI subunits. The sequence is that of Protein TAB2 homolog, chloroplastic from Arabidopsis thaliana (Mouse-ear cress).